We begin with the raw amino-acid sequence, 229 residues long: DNA repair protein RecO (229 aa).

The protein belongs to the RecO family.

Involved in DNA repair and RecF pathway recombination. The chain is DNA repair protein RecO from Legionella pneumophila subsp. pneumophila (strain Philadelphia 1 / ATCC 33152 / DSM 7513).